The following is a 241-amino-acid chain: Attacin-C (241 aa).

Positions 1 to 21 (MSKIVLLIVVIVGVLGSLAVA) are cleaved as a signal peptide. Residues 22–23 (LP) constitute a propeptide that is removed on maturation. Q24 is modified (pyrrolidone carboxylic acid). T39 carries an O-linked (GalNAc...) threonine glycan. Phosphoserine is present on S127.

The protein belongs to the attacin/sarcotoxin-2 family. In terms of tissue distribution, hemolymph (at protein level).

It is found in the secreted. Has antimicrobial activity in synergy with other peptides. Strongest activity observed against E.cloacae. The sequence is that of Attacin-C from Drosophila melanogaster (Fruit fly).